The primary structure comprises 49 residues: Large ribosomal subunit protein bL33B (49 aa).

It belongs to the bacterial ribosomal protein bL33 family.

This Lacticaseibacillus paracasei (strain ATCC 334 / BCRC 17002 / CCUG 31169 / CIP 107868 / KCTC 3260 / NRRL B-441) (Lactobacillus paracasei) protein is Large ribosomal subunit protein bL33B.